Consider the following 615-residue polypeptide: Threonine--tRNA ligase (615 aa).

The editing domain stretch occupies residues 1-132 (MRILQLHCDR…PLAEGFKVIT (132 aa)). Residues 196–495 (PHVALMKRMG…SARGTKPELP (300 aa)) are catalytic. 3 residues coordinate Zn(2+): Cys-288, His-340, and His-464.

It belongs to the class-II aminoacyl-tRNA synthetase family. Homodimer. Requires Zn(2+) as cofactor.

The protein resides in the cytoplasm. The enzyme catalyses tRNA(Thr) + L-threonine + ATP = L-threonyl-tRNA(Thr) + AMP + diphosphate + H(+). Functionally, catalyzes the attachment of threonine to tRNA(Thr) in a two-step reaction: L-threonine is first activated by ATP to form Thr-AMP and then transferred to the acceptor end of tRNA(Thr). Also edits incorrectly charged L-seryl-tRNA(Thr). This is Threonine--tRNA ligase (thrS) from Cenarchaeum symbiosum (strain A).